A 127-amino-acid chain; its full sequence is uncharacterized protein (127 aa).

Positions 71–126 (FYLREYRRIRRRIKELKNRAKYISKGEIAYNPKIMKEVEALKEKLSEIEKKIEELK) form a coiled coil.

This is an uncharacterized protein from Aquifex aeolicus (strain VF5).